Here is a 264-residue protein sequence, read N- to C-terminus: Phosphonoacetaldehyde hydrolase (264 aa).

The Nucleophile role is filled by Asp-9. Residues Asp-9 and Ala-11 each coordinate Mg(2+). Lys-50 serves as the catalytic Schiff-base intermediate with substrate. Asp-183 is a Mg(2+) binding site.

The protein belongs to the HAD-like hydrolase superfamily. PhnX family. In terms of assembly, homodimer. The cofactor is Mg(2+).

It catalyses the reaction phosphonoacetaldehyde + H2O = acetaldehyde + phosphate + H(+). Involved in phosphonate degradation. The chain is Phosphonoacetaldehyde hydrolase from Bacillus mycoides (strain KBAB4) (Bacillus weihenstephanensis).